The sequence spans 252 residues: 7-carboxy-7-deazaguanine synthase (252 aa).

Substrate contacts are provided by residues 22–24 (LQG) and arginine 37. Residues 28-251 (FVGEPQAFVR…QVHKLVDFIP (224 aa)) enclose the Radical SAM core domain. Cysteine 41, cysteine 45, and cysteine 48 together coordinate [4Fe-4S] cluster. Residue threonine 102 participates in substrate binding. Residue glycine 104 participates in S-adenosyl-L-methionine binding.

This sequence belongs to the radical SAM superfamily. 7-carboxy-7-deazaguanine synthase family. In terms of assembly, homodimer. Requires [4Fe-4S] cluster as cofactor. The cofactor is S-adenosyl-L-methionine. It depends on Mg(2+) as a cofactor.

It catalyses the reaction 6-carboxy-5,6,7,8-tetrahydropterin + H(+) = 7-carboxy-7-deazaguanine + NH4(+). It participates in purine metabolism; 7-cyano-7-deazaguanine biosynthesis. Catalyzes the complex heterocyclic radical-mediated conversion of 6-carboxy-5,6,7,8-tetrahydropterin (CPH4) to 7-carboxy-7-deazaguanine (CDG), a step common to the biosynthetic pathways of all 7-deazapurine-containing compounds. This chain is 7-carboxy-7-deazaguanine synthase, found in Methanopyrus kandleri (strain AV19 / DSM 6324 / JCM 9639 / NBRC 100938).